The following is a 421-amino-acid chain: Medium-chain specific acyl-CoA dehydrogenase, mitochondrial (421 aa).

The N-terminal 25 residues, 1 to 25, are a transit peptide targeting the mitochondrion; the sequence is MAAAFRRGCRVLRSVSHFECRTQHS. K30 and K69 each carry N6-acetyllysine; alternate. An N6-succinyllysine; alternate mark is found at K30 and K69. K79 bears the N6-acetyllysine mark. 158–167 serves as a coordination point for FAD; the sequence is YCVTEPSAGS. S167 serves as a coordination point for octanoyl-CoA. Residue K179 is modified to N6-succinyllysine. 191–193 serves as a coordination point for FAD; that stretch reads WIT. At K212 the chain carries N6-acetyllysine; alternate. An N6-succinyllysine; alternate modification is found at K212. S216 is a binding site for octanoyl-CoA. N6-acetyllysine; alternate occurs at positions 217, 235, 259, and 271. N6-succinyllysine; alternate occurs at positions 217, 235, 259, and 271. 2 residues coordinate octanoyl-CoA: D278 and R281. Residue K301 is modified to N6-acetyllysine. Residues 306–308 and 316–317 each bind FAD; these read RKT and HQ. Residues R349 and T351 each coordinate octanoyl-CoA. Phosphothreonine is present on T351. FAD is bound at residue 374–378; sequence QIFGG. An octanoyl-CoA-binding site is contributed by E401. The active-site Proton acceptor is the E401. Position 402–405 (402–405) interacts with FAD; sequence GTAQ.

Belongs to the acyl-CoA dehydrogenase family. As to quaternary structure, homotetramer. Interacts with the heterodimeric electron transfer flavoprotein ETF. Requires FAD as cofactor. In terms of processing, acetylated. Could occur at proximity of the cofactor-binding sites and reduce the catalytic activity. Could be deacetylated by SIRT3.

It is found in the mitochondrion matrix. It carries out the reaction a medium-chain 2,3-saturated fatty acyl-CoA + oxidized [electron-transfer flavoprotein] + H(+) = a medium-chain (2E)-enoyl-CoA + reduced [electron-transfer flavoprotein]. It catalyses the reaction pentanoyl-CoA + oxidized [electron-transfer flavoprotein] + H(+) = (2E)-pentenoyl-CoA + reduced [electron-transfer flavoprotein]. The enzyme catalyses hexanoyl-CoA + oxidized [electron-transfer flavoprotein] + H(+) = (2E)-hexenoyl-CoA + reduced [electron-transfer flavoprotein]. The catalysed reaction is octanoyl-CoA + oxidized [electron-transfer flavoprotein] + H(+) = (2E)-octenoyl-CoA + reduced [electron-transfer flavoprotein]. It carries out the reaction decanoyl-CoA + oxidized [electron-transfer flavoprotein] + H(+) = (2E)-decenoyl-CoA + reduced [electron-transfer flavoprotein]. It catalyses the reaction dodecanoyl-CoA + oxidized [electron-transfer flavoprotein] + H(+) = (2E)-dodecenoyl-CoA + reduced [electron-transfer flavoprotein]. The enzyme catalyses tetradecanoyl-CoA + oxidized [electron-transfer flavoprotein] + H(+) = (2E)-tetradecenoyl-CoA + reduced [electron-transfer flavoprotein]. The catalysed reaction is oxidized [electron-transfer flavoprotein] + hexadecanoyl-CoA + H(+) = (2E)-hexadecenoyl-CoA + reduced [electron-transfer flavoprotein]. It participates in lipid metabolism; mitochondrial fatty acid beta-oxidation. Functionally, medium-chain specific acyl-CoA dehydrogenase is one of the acyl-CoA dehydrogenases that catalyze the first step of mitochondrial fatty acid beta-oxidation, an aerobic process breaking down fatty acids into acetyl-CoA and allowing the production of energy from fats. The first step of fatty acid beta-oxidation consists in the removal of one hydrogen from C-2 and C-3 of the straight-chain fatty acyl-CoA thioester, resulting in the formation of trans-2-enoyl-CoA. Electron transfer flavoprotein (ETF) is the electron acceptor that transfers electrons to the main mitochondrial respiratory chain via ETF-ubiquinone oxidoreductase (ETF dehydrogenase). Among the different mitochondrial acyl-CoA dehydrogenases, medium-chain specific acyl-CoA dehydrogenase acts specifically on acyl-CoAs with saturated 6 to 12 carbons long primary chains. In Mus musculus (Mouse), this protein is Medium-chain specific acyl-CoA dehydrogenase, mitochondrial.